The chain runs to 214 residues: Peptidyl-tRNA hydrolase (214 aa).

Residue Y14 coordinates tRNA. The active-site Proton acceptor is the H19. 3 residues coordinate tRNA: Y64, N66, and N113. The segment at 184–214 (RINAPPPKPEKKRGSETSDPSAESADHAGGG) is disordered.

Belongs to the PTH family. Monomer.

Its subcellular location is the cytoplasm. The enzyme catalyses an N-acyl-L-alpha-aminoacyl-tRNA + H2O = an N-acyl-L-amino acid + a tRNA + H(+). Hydrolyzes ribosome-free peptidyl-tRNAs (with 1 or more amino acids incorporated), which drop off the ribosome during protein synthesis, or as a result of ribosome stalling. In terms of biological role, catalyzes the release of premature peptidyl moieties from peptidyl-tRNA molecules trapped in stalled 50S ribosomal subunits, and thus maintains levels of free tRNAs and 50S ribosomes. The sequence is that of Peptidyl-tRNA hydrolase from Roseiflexus castenholzii (strain DSM 13941 / HLO8).